A 742-amino-acid polypeptide reads, in one-letter code: Catalase-peroxidase (742 aa).

The interval 1–43 (MSDSCPVAHEGNTQSTSESENPVIPSPTPAANRPRNNRDWWPN) is disordered. A compositionally biased stretch (polar residues) spans 11–20 (GNTQSTSESE). Positions 109-231 (WHAAGTYRIA…LGAVQMGLIY (123 aa)) form a cross-link, tryptophyl-tyrosyl-methioninium (Trp-Tyr) (with M-257). The Proton acceptor role is filled by His-110. The tryptophyl-tyrosyl-methioninium (Tyr-Met) (with W-109) cross-link spans 231–257 (YVNPEGPNGQPDPLAAARDIRETFSRM). His-272 serves as a coordination point for heme b.

The protein belongs to the peroxidase family. Peroxidase/catalase subfamily. As to quaternary structure, homodimer or homotetramer. Requires heme b as cofactor. In terms of processing, formation of the three residue Trp-Tyr-Met cross-link is important for the catalase, but not the peroxidase activity of the enzyme.

It carries out the reaction H2O2 + AH2 = A + 2 H2O. It catalyses the reaction 2 H2O2 = O2 + 2 H2O. Its function is as follows. Bifunctional enzyme with both catalase and broad-spectrum peroxidase activity. This chain is Catalase-peroxidase, found in Rhodococcus jostii (strain RHA1).